A 95-amino-acid polypeptide reads, in one-letter code: Aspartyl/glutamyl-tRNA(Asn/Gln) amidotransferase subunit C (95 aa).

This sequence belongs to the GatC family. As to quaternary structure, heterotrimer of A, B and C subunits.

It catalyses the reaction L-glutamyl-tRNA(Gln) + L-glutamine + ATP + H2O = L-glutaminyl-tRNA(Gln) + L-glutamate + ADP + phosphate + H(+). It carries out the reaction L-aspartyl-tRNA(Asn) + L-glutamine + ATP + H2O = L-asparaginyl-tRNA(Asn) + L-glutamate + ADP + phosphate + 2 H(+). Its function is as follows. Allows the formation of correctly charged Asn-tRNA(Asn) or Gln-tRNA(Gln) through the transamidation of misacylated Asp-tRNA(Asn) or Glu-tRNA(Gln) in organisms which lack either or both of asparaginyl-tRNA or glutaminyl-tRNA synthetases. The reaction takes place in the presence of glutamine and ATP through an activated phospho-Asp-tRNA(Asn) or phospho-Glu-tRNA(Gln). The sequence is that of Aspartyl/glutamyl-tRNA(Asn/Gln) amidotransferase subunit C from Azoarcus sp. (strain BH72).